A 518-amino-acid polypeptide reads, in one-letter code: Chromosomal replication initiator protein DnaA (518 aa).

Residues 1–73 (MTLAEFWPLC…REELAAGRPA (73 aa)) are domain I, interacts with DnaA modulators. Positions 73–180 (AFVFKPGEGV…DAEEARYEQT (108 aa)) are domain II. Positions 144–180 (HEPRQAAGPASRPESAAVAKARTDAQRDAEEARYEQT) are disordered. The segment covering 164–177 (ARTDAQRDAEEARY) has biased composition (basic and acidic residues). Residues 181-397 (NLSPDYTFDT…GAFNRVGASS (217 aa)) form a domain III, AAA+ region region. ATP is bound by residues Gly225, Gly227, Lys228, and Thr229. The domain IV, binds dsDNA stretch occupies residues 398–518 (RFMNRPVIDI…YEKLLILIQN (121 aa)).

The protein belongs to the DnaA family. Oligomerizes as a right-handed, spiral filament on DNA at oriC.

It is found in the cytoplasm. Its function is as follows. Plays an essential role in the initiation and regulation of chromosomal replication. ATP-DnaA binds to the origin of replication (oriC) to initiate formation of the DNA replication initiation complex once per cell cycle. Binds the DnaA box (a 9 base pair repeat at the origin) and separates the double-stranded (ds)DNA. Forms a right-handed helical filament on oriC DNA; dsDNA binds to the exterior of the filament while single-stranded (ss)DNA is stabiized in the filament's interior. The ATP-DnaA-oriC complex binds and stabilizes one strand of the AT-rich DNA unwinding element (DUE), permitting loading of DNA polymerase. After initiation quickly degrades to an ADP-DnaA complex that is not apt for DNA replication. Binds acidic phospholipids. This Neisseria gonorrhoeae (strain ATCC 700825 / FA 1090) protein is Chromosomal replication initiator protein DnaA.